Consider the following 447-residue polypeptide: Phosphoglucosamine mutase (447 aa).

Ser100 functions as the Phosphoserine intermediate in the catalytic mechanism. Residues Ser100, Asp239, Asp241, and Asp243 each coordinate Mg(2+). Phosphoserine is present on Ser100.

Belongs to the phosphohexose mutase family. The cofactor is Mg(2+). Activated by phosphorylation.

The enzyme catalyses alpha-D-glucosamine 1-phosphate = D-glucosamine 6-phosphate. In terms of biological role, catalyzes the conversion of glucosamine-6-phosphate to glucosamine-1-phosphate. The protein is Phosphoglucosamine mutase of Caldanaerobacter subterraneus subsp. tengcongensis (strain DSM 15242 / JCM 11007 / NBRC 100824 / MB4) (Thermoanaerobacter tengcongensis).